The chain runs to 73 residues: RIFDTSCKGFYDRGLFAQLDRVCEDCYNLYRKPHVAAECRRDCYTTEVFESCLKDLMMHDFINEYKEMALMVS.

Cystine bridges form between C7/C43, C23/C39, and C26/C52. The residue at position 73 (S73) is a Serine amide.

As to expression, produced by the medulla terminalis X-organ in the eyestalks and transported to the sinus gland where they are stored and released. Found also in the brain; in the neuroendocrine structures of the protocerebrum.

It localises to the secreted. Functionally, hormone found in the sinus gland of isopods and decapods which controls the blood sugar level. Has a secretagogue action over the amylase released from the midgut gland. May act as a stress hormone and may be involved in the control of molting and reproduction. The sequence is that of Crustacean hyperglycemic hormone from Armadillidium vulgare (Pillbug).